A 151-amino-acid chain; its full sequence is Nucleoside diphosphate kinase (151 aa).

Residues Lys-11, Phe-59, Arg-87, Thr-93, Arg-104, and Asn-114 each contribute to the ATP site. The Pros-phosphohistidine intermediate role is filled by His-117.

This sequence belongs to the NDK family. As to quaternary structure, homotetramer. The cofactor is Mg(2+).

It localises to the cytoplasm. It carries out the reaction a 2'-deoxyribonucleoside 5'-diphosphate + ATP = a 2'-deoxyribonucleoside 5'-triphosphate + ADP. It catalyses the reaction a ribonucleoside 5'-diphosphate + ATP = a ribonucleoside 5'-triphosphate + ADP. Its function is as follows. Major role in the synthesis of nucleoside triphosphates other than ATP. The ATP gamma phosphate is transferred to the NDP beta phosphate via a ping-pong mechanism, using a phosphorylated active-site intermediate. In Prochlorococcus marinus (strain NATL1A), this protein is Nucleoside diphosphate kinase.